The primary structure comprises 152 residues: Psoriasis susceptibility 1 candidate gene 1 protein (152 aa).

Positions 1–31 are enriched in polar residues; the sequence is MTCTDQKSHSQRALGTQTPALQGPQLLNTDP. Residues 1 to 42 are disordered; the sequence is MTCTDQKSHSQRALGTQTPALQGPQLLNTDPSSEETRPPHVN.

In terms of tissue distribution, expressed in skin. Also found in heart, placenta, liver, skeletal muscle and pancreas.

The protein is Psoriasis susceptibility 1 candidate gene 1 protein (PSORS1C1) of Homo sapiens (Human).